Consider the following 92-residue polypeptide: CRISPR-associated endoribonuclease Cas2 1 (92 aa).

Residue D10 participates in Mg(2+) binding.

It belongs to the CRISPR-associated endoribonuclease Cas2 protein family. As to quaternary structure, homodimer, forms a heterotetramer with a Cas1 homodimer. It depends on Mg(2+) as a cofactor.

CRISPR (clustered regularly interspaced short palindromic repeat), is an adaptive immune system that provides protection against mobile genetic elements (viruses, transposable elements and conjugative plasmids). CRISPR clusters contain sequences complementary to antecedent mobile elements and target invading nucleic acids. CRISPR clusters are transcribed and processed into CRISPR RNA (crRNA). Functions as a ssRNA-specific endoribonuclease. Involved in the integration of spacer DNA into the CRISPR cassette. The sequence is that of CRISPR-associated endoribonuclease Cas2 1 from Thermodesulfovibrio yellowstonii (strain ATCC 51303 / DSM 11347 / YP87).